The primary structure comprises 343 residues: Transcription factor MYB11 (343 aa).

HTH myb-type domains lie at 9–61 (KVGI…INYL) and 62–116 (RSDI…SRKL). 2 DNA-binding regions (H-T-H motif) span residues 37–61 (WRSLPKNAGLKRCGKSCRLRWINYL) and 89–112 (WSTIASNLPGRTDNEIKNYWNSHL). The disordered stretch occupies residues 126–146 (ANTVENAPPPPKRRPGRTSRS).

In terms of tissue distribution, expressed in seedlings, roots, cotyledons, leaves and apical meristems.

It localises to the nucleus. Modulates overall growth by reducing the proliferation activity of meristematic cells and delaying development. Flavonol-specific transcription activator involved in the regulation of several genes of flavonoid biosynthesis. Activates the expression of CHS, CHI, F3H and FLS1. Confers tolerance to UV-B. This chain is Transcription factor MYB11, found in Arabidopsis thaliana (Mouse-ear cress).